The sequence spans 288 residues: Polyamine aminopropyltransferase (288 aa).

The PABS domain maps to 9–238; it reads ETLHDQFGQY…GIMTFAWATD (230 aa). Position 33 (Gln-33) interacts with S-methyl-5'-thioadenosine. Spermidine-binding residues include His-64 and Asp-88. S-methyl-5'-thioadenosine is bound by residues Glu-108 and 140 to 141; that span reads DG. Asp-158 acts as the Proton acceptor in catalysis. Spermidine is bound at residue 158–161; the sequence is DCTD. Pro-165 lines the S-methyl-5'-thioadenosine pocket.

This sequence belongs to the spermidine/spermine synthase family. In terms of assembly, homodimer or homotetramer.

It is found in the cytoplasm. It carries out the reaction S-adenosyl 3-(methylsulfanyl)propylamine + putrescine = S-methyl-5'-thioadenosine + spermidine + H(+). Its pathway is amine and polyamine biosynthesis; spermidine biosynthesis; spermidine from putrescine: step 1/1. Catalyzes the irreversible transfer of a propylamine group from the amino donor S-adenosylmethioninamine (decarboxy-AdoMet) to putrescine (1,4-diaminobutane) to yield spermidine. The sequence is that of Polyamine aminopropyltransferase from Escherichia coli (strain ATCC 8739 / DSM 1576 / NBRC 3972 / NCIMB 8545 / WDCM 00012 / Crooks).